The primary structure comprises 458 residues: ATP synthase subunit beta (458 aa).

Position 148–155 (148–155 (GGAGVGKT)) interacts with ATP.

This sequence belongs to the ATPase alpha/beta chains family. As to quaternary structure, F-type ATPases have 2 components, CF(1) - the catalytic core - and CF(0) - the membrane proton channel. CF(1) has five subunits: alpha(3), beta(3), gamma(1), delta(1), epsilon(1). CF(0) has three main subunits: a(1), b(2) and c(9-12). The alpha and beta chains form an alternating ring which encloses part of the gamma chain. CF(1) is attached to CF(0) by a central stalk formed by the gamma and epsilon chains, while a peripheral stalk is formed by the delta and b chains.

Its subcellular location is the cell inner membrane. It carries out the reaction ATP + H2O + 4 H(+)(in) = ADP + phosphate + 5 H(+)(out). Its function is as follows. Produces ATP from ADP in the presence of a proton gradient across the membrane. The catalytic sites are hosted primarily by the beta subunits. The chain is ATP synthase subunit beta from Francisella tularensis subsp. novicida (strain U112).